A 418-amino-acid chain; its full sequence is MEDYHISRGKHFYTIGLSYKKADAEIRGHFSLTEESKQRLLEQAKEEGIDGILVTSTCNRTEIYGFAQHPFQLIKLLCEHTHGTVEEFEKVAYVYKNKQAITHIFKVGTGLDSQILGDFEIISQLKIAFVRSKKLGLVNAFLERLVNAVIQASKRIKNETEISTGATSVSFASVQYILKHIDKVSEKNILLFGTGKIGRNTCENLVKHTRNNHITLINRTKDKAERIAGKFNLIVKDYADLQAEIRNSDILIVATGAQNPTISKELIYPKKELLILDLSIPKNVSDDVHELENVKLIHLDHLSQMTDETLEKRKQFIPQAKEIITEVESEFNRWLETRKFAPTIKALKKKLKTMKDDELDFQRKKISDFNDEQAEIVSNRIIQKIMKHFANHLKGDAETTDESLELIQKVFQLEEVNK.

Residues 57 to 60 (TCNR), Ser-113, 118 to 120 (DFE), and Gln-124 each bind substrate. Catalysis depends on Cys-58, which acts as the Nucleophile. 193–198 (GTGKIG) lines the NADP(+) pocket.

This sequence belongs to the glutamyl-tRNA reductase family. In terms of assembly, homodimer.

It catalyses the reaction (S)-4-amino-5-oxopentanoate + tRNA(Glu) + NADP(+) = L-glutamyl-tRNA(Glu) + NADPH + H(+). Its pathway is porphyrin-containing compound metabolism; protoporphyrin-IX biosynthesis; 5-aminolevulinate from L-glutamyl-tRNA(Glu): step 1/2. Its function is as follows. Catalyzes the NADPH-dependent reduction of glutamyl-tRNA(Glu) to glutamate 1-semialdehyde (GSA). The polypeptide is Glutamyl-tRNA reductase (Christiangramia forsetii (strain DSM 17595 / CGMCC 1.15422 / KT0803) (Gramella forsetii)).